We begin with the raw amino-acid sequence, 1938 residues long: MSSDQEMAVFGEAAPYLRKSEKERIEAQNKPFDAKTSVFVADPKESFVKATVQSREGGKVTAKTEAGATVTVKEDQVFPMNPPKFDKIEDMAMMTHLHEPAVLYNLKERYAAWMIYTYSGLFCVTVNPYKWLPVYNAEVVTAYRGKKRQEAPPHIFSISDNAYQFMLTDRENQSILITGESGAGKTVNTKRVIQYFATIAVTGEKKKEEPTSGKMQGTLEDQIISANPLLEAFGNAKTVRNDNSSRFGKFIRIHFGTTGKLASADIETYLLEKSRVTFQLKAERSYHIFYQIMSNKKPELIEMLLITTNPYDYAYVSQGEITVPSIDDQEELMATDSAIEILGFTSDERVSIYKLTGAVMHYGNLKFKQKQREEQAEPDGTEVADKAAYLQGLNSADLLKALCYPRVKVGNEFVTKGQTVEQVYNAVGALAKAVYDKMFLWMVARINQQLDTKQPRQYFIGVLDIAGFEIFDFNSLEQLCINFTNEKLQQFFNHHMFVLEQEEYKKEGIEWEFIDFGMDLAACIELIEKPMGIFSILEEECMFPKATDMSFKNKLYEQHLGKSNNFQKPKPAKGKAEAHFSLIHYAGTVDYNITGWLDKNKDPLNETVVGLYQKSSVKTLALLFSGPASGEAEGGPKKGGKKKGSSFQTVSALFRENLNKLMTNLRSTHPHFVRCIIPNETKTPGAMEHELVLHQLRCNGVLEGIRICRKGFPSRILYADFKQRYKVLNASAIPEGQFIDSKKASEKLLASIDVDHTQYKFGHTKVFFKAGLLGLLEEMRDEKLAQLITRTQARCRGFLARVEYQKMVERRESIFCIQYNVRAFMNVKHWPWMKLYFKIKPLLKSAETEKEMANMKEEFEKTKEELAKSEAKRKELEEKMVTLTQEKNDLQLQVQSEADALADAEERCDQLIKTKIQLEAKIKEVTERAEDEEEINAELTAKKRKLEDECSELKKDIDDLELTLAKVEKEKHATENKVKNLTEEMAGLDETIAKLTKEKKALQEAHQQTLDDLQAEEDKVNTLTKAKTKLEQQVDDLEGSLEQEKKLRMDLERAKRKLEGDLKLAQESTMDIENDKQQLDEKLKKKEFEMSNLQSKIEDEQALAMQLQKKIKELQARIEELEEEIEAERASRAKAEKQRSDLSRELEEISERLEEAGGATSAQIEMNKKREAEFQKMRRDLEEATLQHEATAAALRKKHADSVAELGEQIDNLQRVKQKLEKEKSEMKMEIDDLASNMETVSKAKGNLEKMCRALEDQLSELKTKEDEQQRLINDLTTQRARLQTESGEFSRQLDEKDALVSQLSRGKQAFTQQIEELKRQLEEEIKAKSALAHALQSARHDCDLLREQYEEEQEGKAELQRAMSKANSEVAQWRTKYETDAIQRTEELEEAKKKLAQRLQDAEEHVEAVNAKCASLEKTKQRLQNEVEDLMIDVERTNAACAALDKKQRNFDKILSEWKQKYEETHAELEASQKESRSLSTELFKIKNAYEESLDQLETLKRENKNLQQEISDLTEQIAEGGKRIHELEKVKKQVEQEKSEIQAALEEAEASLEHEEGKILRIQLELNQVKSEIDRKIAEKDEEIDQLKRNHIRIVESMQSTLDAEIRSRNDAIRLKKKMEGDLNEMEIQLNHANRMAAEALKNYRSTQAILKDTQIHLDDALRGQEDLKEQLAMVERRANLLQAEIEELRATLEQTERSRKIAEQELLDASERVQLLHTQNTSLINTKKKLETDITQIQGEMEDIIQEARNAEEKAKKAITDAAMMAEELKKEQDTSAHLERMKKNLEQTVKDLQHRLDEAEQLALKGGKKQIQKLEARVRELEGEVESEQKRNVEAVKGLRKHERRVKELTYQTEEDRKNILRLQDLVDKLQAKVKSYKRQAEEAEEQSNVNLSKFRKLQHELEEAEERADIAESQVNKLRVKSREVHTKIISEE.

In terms of domain architecture, Myosin N-terminal SH3-like spans 33–82 (DAKTSVFVADPKESFVKATVQSREGGKVTAKTEAGATVTVKEDQVFPMNP). Residues T64 and T69 each carry the phosphothreonine modification. A Myosin motor domain is found at 86-781 (DKIEDMAMMT…LLGLLEEMRD (696 aa)). N6,N6,N6-trimethyllysine is present on K130. 179 to 186 (GESGAGKT) provides a ligand contact to ATP. Phosphotyrosine is present on Y389. T419 is modified (phosphothreonine). Y424 is subject to Phosphotyrosine. S625 carries the post-translational modification Phosphoserine. An actin-binding region spans residues 658 to 680 (LNKLMTNLRSTHPHFVRCIIPNE). A Pros-methylhistidine modification is found at H756. The segment at 760–774 (KFGHTKVFFKAGLLG) is actin-binding. The region spanning 784-813 (LAQLITRTQARCRGFLARVEYQKMVERRES) is the IQ domain. The stretch at 842–1938 (LLKSAETEKE…EVHTKIISEE (1097 aa)) forms a coiled coil. Residues S1091 and S1095 each carry the phosphoserine modification. Disordered stretches follow at residues 1124–1146 (EIEAERASRAKAEKQRSDLSREL) and 1152–1171 (RLEEAGGATSAQIEMNKKRE). Positions 1127–1146 (AERASRAKAEKQRSDLSREL) are enriched in basic and acidic residues. S1161 and S1236 each carry phosphoserine. At T1240 the chain carries Phosphothreonine. S1242 and S1260 each carry phosphoserine. 2 positions are modified to phosphothreonine: T1264 and T1285. Phosphoserine is present on residues S1287, S1291, S1302, and S1305. Y1463 is subject to Phosphotyrosine. At T1466 the chain carries Phosphothreonine. S1473 is modified (phosphoserine). At Y1491 the chain carries Phosphotyrosine. Position 1494 is a phosphoserine (S1494). T1500 is modified (phosphothreonine). S1513 is modified (phosphoserine). Residue T1516 is modified to Phosphothreonine. Residues S1541, S1553, S1573, S1599, S1602, S1713, and S1725 each carry the phosphoserine modification. Phosphothreonine occurs at positions 1729 and 1735.

This sequence belongs to the TRAFAC class myosin-kinesin ATPase superfamily. Myosin family. In terms of assembly, muscle myosin is a hexameric protein that consists of 2 heavy chain subunits (MHC), 2 alkali light chain subunits (MLC) and 2 regulatory light chain subunits (MLC-2). Interacts with SLC26A5.

Its subcellular location is the cytoplasm. The protein resides in the myofibril. Its function is as follows. Required for normal hearing. It plays a role in cochlear amplification of auditory stimuli, likely through the positive regulation of prestin (SLC26A5) activity and outer hair cell (OHC) electromotility. The protein is Myosin-1 (MYH1) of Bos taurus (Bovine).